Reading from the N-terminus, the 90-residue chain is MMKTSVMLMLVVVISLMCSGEAQEVARTYCGRHLADTLADLCFGVEKRGGAQYAPYFWTRQYLGSRGKRGVVDECCFRPCTLDVLLSYCG.

The N-terminal stretch at 1-20 (MMKTSVMLMLVVVISLMCSG) is a signal peptide. 3 disulfides stabilise this stretch: Cys-30/Cys-76, Cys-42/Cys-89, and Cys-75/Cys-80. Residues 49-67 (GGAQYAPYFWTRQYLGSRG) constitute a propeptide, c peptide like.

The protein belongs to the insulin family. As to quaternary structure, heterodimer of a B chain and an A chain linked by two disulfide bonds.

It is found in the secreted. Brain peptide responsible for activation of prothoracic glands to produce ecdysone in insects. This Bombyx mori (Silk moth) protein is Bombyxin B-7 (BBXB7).